Consider the following 264-residue polypeptide: Hydroxyethylthiazole kinase (264 aa).

M45 is a binding site for substrate. ATP-binding residues include R121 and S167. Position 194 (G194) interacts with substrate.

It belongs to the Thz kinase family. Requires Mg(2+) as cofactor.

The catalysed reaction is 5-(2-hydroxyethyl)-4-methylthiazole + ATP = 4-methyl-5-(2-phosphooxyethyl)-thiazole + ADP + H(+). It functions in the pathway cofactor biosynthesis; thiamine diphosphate biosynthesis; 4-methyl-5-(2-phosphoethyl)-thiazole from 5-(2-hydroxyethyl)-4-methylthiazole: step 1/1. Functionally, catalyzes the phosphorylation of the hydroxyl group of 4-methyl-5-beta-hydroxyethylthiazole (THZ). In Aliivibrio salmonicida (strain LFI1238) (Vibrio salmonicida (strain LFI1238)), this protein is Hydroxyethylthiazole kinase.